A 449-amino-acid polypeptide reads, in one-letter code: Uric acid permease PucJ (449 aa).

13 helical membrane passes run 11 to 31, 41 to 61, 67 to 87, 91 to 111, 119 to 139, 158 to 178, 191 to 211, 229 to 249, 277 to 297, 313 to 333, 334 to 354, 372 to 392, and 401 to 421; these read LSLQHVLAMYAGAILVPLLVG, LSYLLAIDLLTCGVATLLQTL, GIGLPVMLGSSFVAVTPMIAI, YGIHAIYGSIIAAGVFIFLFA, VLFPPVVTGTVVTLIGLSLVP, EYGSLENLLLSVGVLVLILVL, VLIGIAAGTAAAAIMGKVSFS, APAFEIGPILTMLIVGIVIIV, AEGIAILIGGLFNAFPYNTFA, IVVTAGCILVCLGLIPKIAAL, ASAVPAAVLGGATVVMFGMVI, LLTIACSIALGIGASTAPGIF, and ILVSDGTITGSLTAIFLNLFF.

This sequence belongs to the nucleobase:cation symporter-2 (NCS2) (TC 2.A.40) family.

The protein resides in the cell membrane. In terms of biological role, uptake of uric acid. In Bacillus subtilis (strain 168), this protein is Uric acid permease PucJ (pucJ).